The following is a 335-amino-acid chain: Fructose-1,6-bisphosphatase class 1 (335 aa).

Residues glutamate 90, aspartate 113, leucine 115, and aspartate 116 each contribute to the Mg(2+) site. Substrate contacts are provided by residues 116 to 119 (DGSS), asparagine 209, tyrosine 242, and lysine 272. Residue glutamate 278 participates in Mg(2+) binding.

This sequence belongs to the FBPase class 1 family. Homotetramer. Mg(2+) serves as cofactor.

The protein resides in the cytoplasm. The enzyme catalyses beta-D-fructose 1,6-bisphosphate + H2O = beta-D-fructose 6-phosphate + phosphate. It functions in the pathway carbohydrate biosynthesis; gluconeogenesis. This chain is Fructose-1,6-bisphosphatase class 1, found in Mannheimia succiniciproducens (strain KCTC 0769BP / MBEL55E).